The following is a 317-amino-acid chain: MGRPPCCDKSNVKKGLWTEEEDAKILAYVAIHGVGNWSLIPKKAGLNRCGKSCRLRWTNYLRPDLKHDSFSTQEEELIIECHRAIGSRWSSIARKLPGRTDNDVKNHWNTKLKKKLMKMGIDPVTHKPVSQLLAEFRNISGHGNASFKTEPSNNSILTQSNSAWEMMRNTTTNHESYYTNSPMMFTNSSEYQTTPFHFYSHPNHLLNGTTSSCSSSSSSTSITQPNQVPQTPVTNFYWSDFLLSDPVPQVVGSSATSDLTFTQNEHHFNIEAEYISQNIDSKASGTCHSASSFVDEILDKDQEMLSQFPQLLNDFDY.

2 consecutive HTH myb-type domains span residues 9-65 (KSNV…RPDL) and 66-116 (KHDS…KKKL). 2 DNA-binding regions (H-T-H motif) span residues 37–61 (WSLI…TNYL) and 89–112 (WSSI…NTKL).

In terms of tissue distribution, inflorescences-specific. Accumulates in anthers, especially in tapetum and meiocytes/microsporocytes and microspores during anther development.

The protein localises to the nucleus. In terms of biological role, required for anther development and early tapetal function during microspore maturation. Regulates callose dissolution required for microspores release from the tetrads. This Arabidopsis thaliana (Mouse-ear cress) protein is Transcription factor MYB35.